The following is a 92-amino-acid chain: Long neurotoxin 2 (92 aa).

Positions methionine 1–threonine 21 are cleaved as a signal peptide. Disulfide bonds link cysteine 24/cysteine 42, cysteine 35/cysteine 63, cysteine 48/cysteine 52, cysteine 67/cysteine 79, and cysteine 80/cysteine 85.

Belongs to the three-finger toxin family. Long-chain subfamily. Type II alpha-neurotoxin sub-subfamily. Expressed by the venom gland.

The protein resides in the secreted. In terms of biological role, binds with high affinity to muscular (alpha-1/CHRNA1) and neuronal (alpha-7/CHRNA7) nicotinic acetylcholine receptor (nAChR) and inhibits acetylcholine from binding to the receptor, thereby impairing neuromuscular and neuronal transmission. This Oxyuranus microlepidotus (Inland taipan) protein is Long neurotoxin 2.